The chain runs to 163 residues: NADH-quinone oxidoreductase subunit 9 (163 aa).

4Fe-4S ferredoxin-type domains lie at 54–84 (LRRY…IDAE) and 94–123 (TRYD…EGPN). [4Fe-4S] cluster-binding residues include cysteine 64, cysteine 67, cysteine 70, cysteine 74, cysteine 103, cysteine 106, cysteine 109, and cysteine 113.

This sequence belongs to the complex I 23 kDa subunit family. NDH-1 is composed of at least 14 different subunits, Nqo1 to Nqo14. The complex has a L-shaped structure, with the hydrophobic arm (subunits Nqo7, Nqo8, Nqo10 to Nqo14) embedded in the inner membrane and the hydrophilic peripheral arm (subunits Nqo1 to Nqo6, Nqo9) protruding into the bacterial cytoplasm. The hydrophilic domain contains all the redox centers. [4Fe-4S] cluster serves as cofactor.

The protein resides in the cell inner membrane. The catalysed reaction is a quinone + NADH + 5 H(+)(in) = a quinol + NAD(+) + 4 H(+)(out). Functionally, NDH-1 shuttles electrons from NADH, via FMN and iron-sulfur (Fe-S) centers, to quinones in the respiratory chain. The immediate electron acceptor for the enzyme in this species is believed to be ubiquinone. Couples the redox reaction to proton translocation (for every two electrons transferred, four hydrogen ions are translocated across the cytoplasmic membrane), and thus conserves the redox energy in a proton gradient. In Paracoccus denitrificans, this protein is NADH-quinone oxidoreductase subunit 9.